Consider the following 405-residue polypeptide: L-carnitine CoA-transferase (405 aa).

CoA-binding residues include lysine 97 and arginine 104. Aspartate 169 serves as the catalytic Nucleophile.

The protein belongs to the CoA-transferase III family. CaiB subfamily. As to quaternary structure, homodimer.

It is found in the cytoplasm. It catalyses the reaction crotonobetainyl-CoA + (R)-carnitine = crotonobetaine + (R)-carnitinyl-CoA. The enzyme catalyses 4-(trimethylamino)butanoyl-CoA + (R)-carnitine = (R)-carnitinyl-CoA + 4-(trimethylamino)butanoate. It functions in the pathway amine and polyamine metabolism; carnitine metabolism. Catalyzes the reversible transfer of the CoA moiety from gamma-butyrobetainyl-CoA to L-carnitine to generate L-carnitinyl-CoA and gamma-butyrobetaine. Is also able to catalyze the reversible transfer of the CoA moiety from gamma-butyrobetainyl-CoA or L-carnitinyl-CoA to crotonobetaine to generate crotonobetainyl-CoA. In Escherichia fergusonii (strain ATCC 35469 / DSM 13698 / CCUG 18766 / IAM 14443 / JCM 21226 / LMG 7866 / NBRC 102419 / NCTC 12128 / CDC 0568-73), this protein is L-carnitine CoA-transferase.